We begin with the raw amino-acid sequence, 508 residues long: Kinesin light chain (508 aa).

A coiled-coil region spans residues 34-129 (IAEVQKDNEK…KKHLEFMASV (96 aa)). Positions 156–175 (DEENEDRHNMSPTPPSQFAN) are disordered. A Phosphothreonine modification is found at Thr168. TPR repeat units lie at residues 186–219 (LRTLHNLVIQYASQGRYEVAVPLCKQALEDLERT), 228–261 (ATMLNILALVYRDQNKYKEAANLLNDALSIRGKT), 270–303 (AATLNNLAVLYGKRGKYKDAEPLCKRALEIREKV), 312–345 (AKQLNNLALLCQNQGKYDEVEKYYQRALDIYESK), 354–387 (AKTKNNLAGCYLKQGRYTEAEILYKQVLTRAHER), and 437–470 (TTTLKNLGALYRRQGMFEAAETLEDCAMRSKKEA). The residue at position 477 (Thr477) is a Phosphothreonine. A phosphoserine mark is found at Ser480 and Ser485. The interval 484 to 508 (TSNEKRRSKAIKEDLDFSEEKNAKP) is disordered. The span at 493 to 508 (AIKEDLDFSEEKNAKP) shows a compositional bias: basic and acidic residues.

Belongs to the kinesin light chain family. As to quaternary structure, oligomeric complex composed of two heavy chains and two light chains. In terms of tissue distribution, ubiquitous.

Its subcellular location is the cytoplasm. The protein localises to the cytoskeleton. Kinesin is a microtubule-associated force-producing protein that may play a role in organelle transport. The light chain may function in coupling of cargo to the heavy chain or in the modulation of its ATPase activity. This chain is Kinesin light chain (Klc), found in Drosophila melanogaster (Fruit fly).